A 161-amino-acid polypeptide reads, in one-letter code: Large ribosomal subunit protein uL11 (161 aa).

Belongs to the universal ribosomal protein uL11 family. In terms of assembly, part of the ribosomal stalk of the 50S ribosomal subunit. Interacts with L10 and the large rRNA to form the base of the stalk. L10 forms an elongated spine to which L12 dimers bind in a sequential fashion forming a multimeric L10(L12)X complex.

Forms part of the ribosomal stalk which helps the ribosome interact with GTP-bound translation factors. The sequence is that of Large ribosomal subunit protein uL11 from Methanosarcina barkeri (strain Fusaro / DSM 804).